A 262-amino-acid chain; its full sequence is Phosphatidylserine decarboxylase proenzyme (262 aa).

Residues aspartate 86, histidine 142, and serine 226 each act as charge relay system; for autoendoproteolytic cleavage activity in the active site. Serine 226 functions as the Schiff-base intermediate with substrate; via pyruvic acid; for decarboxylase activity in the catalytic mechanism. Serine 226 bears the Pyruvic acid (Ser); by autocatalysis mark.

The protein belongs to the phosphatidylserine decarboxylase family. PSD-B subfamily. Prokaryotic type I sub-subfamily. In terms of assembly, heterodimer of a large membrane-associated beta subunit and a small pyruvoyl-containing alpha subunit. The cofactor is pyruvate. In terms of processing, is synthesized initially as an inactive proenzyme. Formation of the active enzyme involves a self-maturation process in which the active site pyruvoyl group is generated from an internal serine residue via an autocatalytic post-translational modification. Two non-identical subunits are generated from the proenzyme in this reaction, and the pyruvate is formed at the N-terminus of the alpha chain, which is derived from the carboxyl end of the proenzyme. The autoendoproteolytic cleavage occurs by a canonical serine protease mechanism, in which the side chain hydroxyl group of the serine supplies its oxygen atom to form the C-terminus of the beta chain, while the remainder of the serine residue undergoes an oxidative deamination to produce ammonia and the pyruvoyl prosthetic group on the alpha chain. During this reaction, the Ser that is part of the protease active site of the proenzyme becomes the pyruvoyl prosthetic group, which constitutes an essential element of the active site of the mature decarboxylase.

It localises to the cell membrane. The enzyme catalyses a 1,2-diacyl-sn-glycero-3-phospho-L-serine + H(+) = a 1,2-diacyl-sn-glycero-3-phosphoethanolamine + CO2. It participates in phospholipid metabolism; phosphatidylethanolamine biosynthesis; phosphatidylethanolamine from CDP-diacylglycerol: step 2/2. In terms of biological role, catalyzes the formation of phosphatidylethanolamine (PtdEtn) from phosphatidylserine (PtdSer). This is Phosphatidylserine decarboxylase proenzyme from Bacillus anthracis.